We begin with the raw amino-acid sequence, 388 residues long: Queuine tRNA-ribosyltransferase (388 aa).

The active-site Proton acceptor is the Asp-91. Residues 91 to 95 (DSGGY), Asp-145, Gln-190, and Gly-217 each bind substrate. Positions 248 to 254 (GVGAPED) are RNA binding. Catalysis depends on Asp-267, which acts as the Nucleophile. Residues 272-276 (TRLAR) form an RNA binding; important for wobble base 34 recognition region. Zn(2+) is bound by residues Cys-305, Cys-307, Cys-310, and His-336.

This sequence belongs to the queuine tRNA-ribosyltransferase family. As to quaternary structure, homodimer. Within each dimer, one monomer is responsible for RNA recognition and catalysis, while the other monomer binds to the replacement base PreQ1. Zn(2+) is required as a cofactor.

It catalyses the reaction 7-aminomethyl-7-carbaguanine + guanosine(34) in tRNA = 7-aminomethyl-7-carbaguanosine(34) in tRNA + guanine. It functions in the pathway tRNA modification; tRNA-queuosine biosynthesis. Functionally, catalyzes the base-exchange of a guanine (G) residue with the queuine precursor 7-aminomethyl-7-deazaguanine (PreQ1) at position 34 (anticodon wobble position) in tRNAs with GU(N) anticodons (tRNA-Asp, -Asn, -His and -Tyr). Catalysis occurs through a double-displacement mechanism. The nucleophile active site attacks the C1' of nucleotide 34 to detach the guanine base from the RNA, forming a covalent enzyme-RNA intermediate. The proton acceptor active site deprotonates the incoming PreQ1, allowing a nucleophilic attack on the C1' of the ribose to form the product. After dissociation, two additional enzymatic reactions on the tRNA convert PreQ1 to queuine (Q), resulting in the hypermodified nucleoside queuosine (7-(((4,5-cis-dihydroxy-2-cyclopenten-1-yl)amino)methyl)-7-deazaguanosine). This Dictyoglomus turgidum (strain DSM 6724 / Z-1310) protein is Queuine tRNA-ribosyltransferase.